Here is a 238-residue protein sequence, read N- to C-terminus: 3-dehydroquinate dehydratase (238 aa).

3-dehydroquinate contacts are provided by residues 35–37 (ELR) and Arg70. The active-site Proton donor/acceptor is the His133. The Schiff-base intermediate with substrate role is filled by Lys160. Arg202 and Gln225 together coordinate 3-dehydroquinate.

It belongs to the type-I 3-dehydroquinase family. In terms of assembly, homodimer.

The catalysed reaction is 3-dehydroquinate = 3-dehydroshikimate + H2O. Its pathway is metabolic intermediate biosynthesis; chorismate biosynthesis; chorismate from D-erythrose 4-phosphate and phosphoenolpyruvate: step 3/7. Involved in the third step of the chorismate pathway, which leads to the biosynthesis of aromatic amino acids. Catalyzes the cis-dehydration of 3-dehydroquinate (DHQ) and introduces the first double bond of the aromatic ring to yield 3-dehydroshikimate. This is 3-dehydroquinate dehydratase from Staphylococcus aureus (strain MSSA476).